A 160-amino-acid polypeptide reads, in one-letter code: Cytochrome b6-f complex subunit 4 (160 aa).

Helical transmembrane passes span 36–56 (LLYI…GLSV), 95–115 (LLGV…PFIE), and 127–147 (PVAM…GIGA).

This sequence belongs to the cytochrome b family. PetD subfamily. The 4 large subunits of the cytochrome b6-f complex are cytochrome b6, subunit IV (17 kDa polypeptide, petD), cytochrome f and the Rieske protein, while the 4 small subunits are petG, petL, petM and petN. The complex functions as a dimer.

Its subcellular location is the plastid. It is found in the chloroplast thylakoid membrane. Its function is as follows. Component of the cytochrome b6-f complex, which mediates electron transfer between photosystem II (PSII) and photosystem I (PSI), cyclic electron flow around PSI, and state transitions. The protein is Cytochrome b6-f complex subunit 4 of Guillardia theta (Cryptophyte).